The sequence spans 249 residues: Triosephosphate isomerase (249 aa).

Residue 8 to 10 (NWK) participates in substrate binding. Residue His-95 is the Electrophile of the active site. The Proton acceptor role is filled by Glu-163. Substrate is bound by residues Gly-169 and Ser-209.

The protein belongs to the triosephosphate isomerase family. As to quaternary structure, homodimer.

The protein localises to the cytoplasm. The catalysed reaction is D-glyceraldehyde 3-phosphate = dihydroxyacetone phosphate. It participates in carbohydrate biosynthesis; gluconeogenesis. It functions in the pathway carbohydrate degradation; glycolysis; D-glyceraldehyde 3-phosphate from glycerone phosphate: step 1/1. Involved in the gluconeogenesis. Catalyzes stereospecifically the conversion of dihydroxyacetone phosphate (DHAP) to D-glyceraldehyde-3-phosphate (G3P). The sequence is that of Triosephosphate isomerase from Orientia tsutsugamushi (strain Boryong) (Rickettsia tsutsugamushi).